Here is a 410-residue protein sequence, read N- to C-terminus: Dual-specificity RNA methyltransferase RlmN (410 aa).

Glu123 serves as the catalytic Proton acceptor. One can recognise a Radical SAM core domain in the interval 129–378 (EEGRGTLCIS…IRTPRGRDIL (250 aa)). The cysteines at positions 136 and 381 are disulfide-linked. [4Fe-4S] cluster-binding residues include Cys143, Cys147, and Cys150. S-adenosyl-L-methionine-binding positions include 207–208 (GE), Ser239, 261–263 (SLH), and Asn338. The S-methylcysteine intermediate role is filled by Cys381.

This sequence belongs to the radical SAM superfamily. RlmN family. Requires [4Fe-4S] cluster as cofactor.

It is found in the cytoplasm. It carries out the reaction adenosine(2503) in 23S rRNA + 2 reduced [2Fe-2S]-[ferredoxin] + 2 S-adenosyl-L-methionine = 2-methyladenosine(2503) in 23S rRNA + 5'-deoxyadenosine + L-methionine + 2 oxidized [2Fe-2S]-[ferredoxin] + S-adenosyl-L-homocysteine. It catalyses the reaction adenosine(37) in tRNA + 2 reduced [2Fe-2S]-[ferredoxin] + 2 S-adenosyl-L-methionine = 2-methyladenosine(37) in tRNA + 5'-deoxyadenosine + L-methionine + 2 oxidized [2Fe-2S]-[ferredoxin] + S-adenosyl-L-homocysteine. Specifically methylates position 2 of adenine 2503 in 23S rRNA and position 2 of adenine 37 in tRNAs. m2A2503 modification seems to play a crucial role in the proofreading step occurring at the peptidyl transferase center and thus would serve to optimize ribosomal fidelity. This is Dual-specificity RNA methyltransferase RlmN from Mesorhizobium japonicum (strain LMG 29417 / CECT 9101 / MAFF 303099) (Mesorhizobium loti (strain MAFF 303099)).